The sequence spans 528 residues: uncharacterized protein (528 aa).

2 stretches are compositionally biased toward basic residues: residues 1–16 (MGKA…KNHL) and 25–43 (QLAR…SHTK). The interval 1–59 (MGKASKATKKFTKNHLKNTIERRKQLARSKKVYGTKNRNSHTKNKLESGTNDNNKNKED) is disordered.

It belongs to the NOC2 family.

The protein resides in the nucleus. Its subcellular location is the nucleolus. This is an uncharacterized protein from Schizosaccharomyces pombe (strain 972 / ATCC 24843) (Fission yeast).